Here is a 235-residue protein sequence, read N- to C-terminus: Probable transcriptional regulatory protein Ccur92_05350 (235 aa).

It belongs to the TACO1 family.

It localises to the cytoplasm. The polypeptide is Probable transcriptional regulatory protein Ccur92_05350 (Campylobacter curvus (strain 525.92)).